Reading from the N-terminus, the 159-residue chain is Ribosomal RNA large subunit methyltransferase H (159 aa).

Residues L76, G108, and 127–132 (MSKMTF) each bind S-adenosyl-L-methionine.

This sequence belongs to the RNA methyltransferase RlmH family. Homodimer.

It is found in the cytoplasm. The catalysed reaction is pseudouridine(1915) in 23S rRNA + S-adenosyl-L-methionine = N(3)-methylpseudouridine(1915) in 23S rRNA + S-adenosyl-L-homocysteine + H(+). Functionally, specifically methylates the pseudouridine at position 1915 (m3Psi1915) in 23S rRNA. The polypeptide is Ribosomal RNA large subunit methyltransferase H (Ureaplasma parvum serovar 3 (strain ATCC 27815 / 27 / NCTC 11736)).